We begin with the raw amino-acid sequence, 243 residues long: Tetraspanin-36 (243 aa).

Over 1–9 (MDCGIITSK) the chain is Cytoplasmic. The chain crosses the membrane as a helical span at residues 10-30 (TILLLLSLIFWAAGAALAYVG). Over 31-49 (SYVIKSYNNFEDFMSDRHT) the chain is Lumenal. A helical transmembrane segment spans residues 50-70 (LIPAAIIIGVAVVMFIIGFVG). Residues 71-84 (CCATLRESKVGLGL) are Cytoplasmic-facing. The chain crosses the membrane as a helical span at residues 85–105 (FLIIIMLIFAAEVTAFVFGII). The Lumenal portion of the chain corresponds to 106–208 (YRGRIRGDLE…QVLQDVLSYA (103 aa)). Asparagine 149, asparagine 163, and asparagine 174 each carry an N-linked (GlcNAc...) asparagine glycan. Residues 209–229 (MLVILGFAIIKFFGMLSVCVI) traverse the membrane as a helical segment. Residues 230 to 243 (TCKSKKNEYQPLYA) are Cytoplasmic-facing.

It belongs to the tetraspanin (TM4SF) family. Post-translationally, N-glycosylated. In terms of tissue distribution, strongly expressed in melanophores and xanthophores. Also detected in eye, brain, heart, skin, fin, testis and ovary.

The protein localises to the golgi apparatus membrane. It is found in the endoplasmic reticulum membrane. Plays a role in migration and segregation of pigment cells (melanophores and xanthophores). Contributes to pigment stripe patterning in the epidermis. This chain is Tetraspanin-36, found in Danio rerio (Zebrafish).